A 453-amino-acid chain; its full sequence is UDP-N-acetylmuramoylalanine--D-glutamate ligase (453 aa).

120–126 provides a ligand contact to ATP; sequence GSNGKST.

Belongs to the MurCDEF family.

It is found in the cytoplasm. It catalyses the reaction UDP-N-acetyl-alpha-D-muramoyl-L-alanine + D-glutamate + ATP = UDP-N-acetyl-alpha-D-muramoyl-L-alanyl-D-glutamate + ADP + phosphate + H(+). It participates in cell wall biogenesis; peptidoglycan biosynthesis. Its function is as follows. Cell wall formation. Catalyzes the addition of glutamate to the nucleotide precursor UDP-N-acetylmuramoyl-L-alanine (UMA). The sequence is that of UDP-N-acetylmuramoylalanine--D-glutamate ligase from Teredinibacter turnerae (strain ATCC 39867 / T7901).